The following is a 181-amino-acid chain: ATP synthase subunit b, chloroplastic (181 aa).

A helical transmembrane segment spans residues 28–50; it reads IINLSVVLGVLIYFGKGVLSNLL.

It belongs to the ATPase B chain family. F-type ATPases have 2 components, F(1) - the catalytic core - and F(0) - the membrane proton channel. F(1) has five subunits: alpha(3), beta(3), gamma(1), delta(1), epsilon(1). F(0) has four main subunits: a(1), b(1), b'(1) and c(10-14). The alpha and beta chains form an alternating ring which encloses part of the gamma chain. F(1) is attached to F(0) by a central stalk formed by the gamma and epsilon chains, while a peripheral stalk is formed by the delta, b and b' chains.

Its subcellular location is the plastid. The protein localises to the chloroplast thylakoid membrane. In terms of biological role, f(1)F(0) ATP synthase produces ATP from ADP in the presence of a proton or sodium gradient. F-type ATPases consist of two structural domains, F(1) containing the extramembraneous catalytic core and F(0) containing the membrane proton channel, linked together by a central stalk and a peripheral stalk. During catalysis, ATP synthesis in the catalytic domain of F(1) is coupled via a rotary mechanism of the central stalk subunits to proton translocation. Functionally, component of the F(0) channel, it forms part of the peripheral stalk, linking F(1) to F(0). The polypeptide is ATP synthase subunit b, chloroplastic (Cryptomeria japonica (Japanese cedar)).